The chain runs to 329 residues: Elongation factor Ts (329 aa).

The involved in Mg(2+) ion dislocation from EF-Tu stretch occupies residues 79–82 (TDFV).

It belongs to the EF-Ts family.

It is found in the cytoplasm. Its function is as follows. Associates with the EF-Tu.GDP complex and induces the exchange of GDP to GTP. It remains bound to the aminoacyl-tRNA.EF-Tu.GTP complex up to the GTP hydrolysis stage on the ribosome. In Parabacteroides distasonis (strain ATCC 8503 / DSM 20701 / CIP 104284 / JCM 5825 / NCTC 11152), this protein is Elongation factor Ts.